Reading from the N-terminus, the 554-residue chain is Intraflagellar transport protein 56 (554 aa).

Positions 1-24 (MMLSRAKPAVGRGVQHTDKRKKKG) are disordered. 4 TPR repeats span residues 57–90 (EDTN…ENCN), 92–125 (EVWV…LQNR), 151–184 (TEDQ…NREY), and 468–501 (ANDC…EGKR).

The protein belongs to the IFT56 family. In terms of assembly, component of the IFT complex B. Interacts with IFT46; the interaction is direct.

It localises to the cell projection. It is found in the cilium. Component of the intraflagellar transport (IFT) complex B required for transport of proteins in the motile cilium. Required for transport of specific ciliary cargo proteins related to motility, while it is neither required for IFT complex B assembly or motion nor for cilium assembly. Required for efficient coupling between the accumulation of GLI2 and GLI3 at the ciliary tips and their dissociation from the negative regulator SUFU. Plays a key role in maintaining the integrity of the IFT complex B and the proper ciliary localization of the IFT complex B components. Not required for IFT complex A ciliary localization or function. Essential for maintaining proper microtubule organization within the ciliary axoneme. The polypeptide is Intraflagellar transport protein 56 (Homo sapiens (Human)).